The primary structure comprises 108 residues: Large ribosomal subunit protein bL31B (108 aa).

Residues 88–108 (AAVEEAPAVKSKKKAPIKKKK) are disordered. Positions 97–108 (KSKKKAPIKKKK) are enriched in basic residues.

This sequence belongs to the bacterial ribosomal protein bL31 family. Type B subfamily. As to quaternary structure, part of the 50S ribosomal subunit.

The polypeptide is Large ribosomal subunit protein bL31B (Chlamydia abortus (strain DSM 27085 / S26/3) (Chlamydophila abortus)).